Here is a 245-residue protein sequence, read N- to C-terminus: Eukaryotic translation initiation factor 6-2 (245 aa).

Belongs to the eIF-6 family. As to quaternary structure, monomer. Associates with the 60S ribosomal subunit.

It localises to the cytoplasm. Its subcellular location is the nucleus. The protein resides in the nucleolus. Binds to the 60S ribosomal subunit and prevents its association with the 40S ribosomal subunit to form the 80S initiation complex in the cytoplasm. May also be involved in ribosome biogenesis. The polypeptide is Eukaryotic translation initiation factor 6-2 (Arabidopsis thaliana (Mouse-ear cress)).